The sequence spans 130 residues: Small ribosomal subunit protein uS11 (130 aa).

Belongs to the universal ribosomal protein uS11 family. Part of the 30S ribosomal subunit. Interacts with proteins S7 and S18. Binds to IF-3.

In terms of biological role, located on the platform of the 30S subunit, it bridges several disparate RNA helices of the 16S rRNA. Forms part of the Shine-Dalgarno cleft in the 70S ribosome. This is Small ribosomal subunit protein uS11 from Gluconobacter oxydans (strain 621H) (Gluconobacter suboxydans).